The sequence spans 439 residues: Cysteine desulfurase-like protein ustD (439 aa).

The tract at residues 1–25 (MKSVATSSLDDVDKDSVPLGSSING) is disordered. Residues 120–121 (TT), asparagine 206, and 255–257 (SWY) contribute to the pyridoxal 5'-phosphate site. Lysine 258 carries the N6-(pyridoxal phosphate)lysine modification.

The protein belongs to the class-V pyridoxal-phosphate-dependent aminotransferase family. The cofactor is pyridoxal 5'-phosphate.

The protein operates within mycotoxin biosynthesis. Its function is as follows. Cysteine desulfurase-like protein; part of the gene cluster that mediates the biosynthesis of the secondary metabolite ustiloxin B, an antimitotic tetrapeptide. First, ustA is processed by the subtilisin-like endoprotease Kex2 that is outside the ustiloxin B gene cluster, at the C-terminal side of Arg-Lys, after transfer to Golgi apparatus through the endoplasmic reticulum (ER). Cleavage by KEX2 generates 16 peptides YAIG-I to YAIG-XVI. To process the precursor peptide further, at least two peptidases are necessary to cleave the N-terminal and C-terminal sides of the Tyr-Ala-Ile-Gly core peptide which serves as backbone for the synthesis of ustiloxin B, through cyclization and modification of the tyrosine with a non-protein coding amino acid, norvaline. One of the two peptidases must be the serine peptidase ustP; and the other pepdidase is probably ustH. Macrocyclization of the core peptide derived from ustA requires the tyrosinase ustQ, as well as the homologous oxidases ustYa and ustYb, and leads to the production of the first cyclization product N-desmethylustiloxin F. For the formation of N-desmethylustiloxin F, three oxidation steps are required, hydroxylation at the benzylic position, hydroxylation at either the aromatic ring of Tyr or beta-position of Ile, and oxidative cyclization. UstQ may catalyze the oxidation of a phenol moiety, whereas the ustYa and ustYb are most likely responsible for the remaining two-step oxidations. N-desmethylustiloxin F is then methylated by ustM to yield ustiloxin F which in turn substrate of the cytochrome P450 monooxygenase ustC which catalyzes the formation of S-deoxyustiloxin H. The flavoprotein monooxygenases ustF1 and ustF2 then participate in the modification of the side chain of S-deoxyustiloxin H, leading to the synthesis of an oxime intermediate, via ustiloxin H. Finally, carboxylative dehydration performed by the cysteine desulfurase-like protein ustD yields ustiloxin B. The sequence is that of Cysteine desulfurase-like protein ustD from Aspergillus flavus (strain ATCC 200026 / FGSC A1120 / IAM 13836 / NRRL 3357 / JCM 12722 / SRRC 167).